The sequence spans 889 residues: MRTMWWPCLVLALLSGLETSGFPRSPLQLLGKRSLPEGVVDGIEVYSTKISCKVTSRFAHNVVTTRAVNRADTAKEVSFDVELPKTAFITNFTLTIDGVTYPGNVKEKEVAQKQYEKAVSQGKTAGLVKASGRKLEKFTVSVNVAAGSKVTFELTYEELLKRNKGKYEMYLKVQPKQLVRHFEIDAHIFEPQGISMLDAEASFITNDLLGSALTKSFSGKKGHVSFKPSLDQQRSCPTCTDSLLNGDFTIVYDVNRESPGNVQIVNGYFVHFFAPQGLPVVPKNIVFVIDVSGSMSGRKIQQTREALLKILDDVKEDDYLNFILFSTDVTTWKDHLVQATPANLKEAKTFVKNIHDQSMTNINDGLLKGIEMLNKAREDHTVPERSTSIIIMLTDGDANTGESRPEKIQENVRNAIGGKFPLYNLGFGNNLNYNFLETLALENHGLARRIYEDSDANLQLQGFYEEVANPLLTNVEVEYPENAILDLTRNSYPHFYDGSEIVVAGRLVDRNMDNFKADVKGHGALNDLTFTEEVDMEEMDAALKEQGYIFGDYIERLWAYLTIEQLLEKRKNAKGDEKENITAEALDLSLKYHFVTPLTSMVVTKPEDNEDQTSIADKPGEEAIAETTTMSFLTTQQSSQSPYYYVDGDPHFIIQIPGKNDSICFNIDEKPGTVLRLIQDPVTGITVTGQIIGDKRSNASSRTGKTYFGKLGITNAWMDFRVEVTTEKIILGTGAELSTFSWLDTITVTQTGLSVTINRKKNMVVSFGDGISFVIILHQVWKKHPVHQDFLGFYVVDSHRMSAQTHGLLGQFFQPFDFKVFGIRPGSDPTKPDATMVVKNHRLTVTRGSQKDYRKDASVGTKVICWFVHNNGEGLIDGVHTDYIVPSLF.

Positions 1–21 (MRTMWWPCLVLALLSGLETSG) are cleaved as a signal peptide. Residues 22–33 (FPRSPLQLLGKR) constitute a propeptide that is removed on maturation. The 130-residue stretch at 29-158 (LLGKRSLPEG…KVTFELTYEE (130 aa)) folds into the VIT domain. A glycan (N-linked (GlcNAc...) asparagine) is linked at Asn91. The region spanning 284-467 (NIVFVIDVSG…LQLQGFYEEV (184 aa)) is the VWFA domain. A glycan (N-linked (GlcNAc...) asparagine) is linked at Asn580. The residue at position 649 (Asp649) is an Aspartate 1-(chondroitin 4-sulfate)-ester. Positions 650–889 (PHFIIQIPGK…HTDYIVPSLF (240 aa)) are excised as a propeptide.

Belongs to the ITIH family. In terms of assembly, I-alpha-I plasma protease inhibitors are assembled from one or two heavy chains (HC) and one light chain, bikunin. Pre-alpha-inhibitor (P-alpha-I) is composed of ITIH3/HC3 and bikunin. Post-translationally, heavy chains are linked to bikunin via chondroitin 4-sulfate esterified to the alpha-carboxyl of the C-terminal aspartate after propeptide cleavage. Expressed in both liver and brain.

It localises to the secreted. In terms of biological role, may act as a carrier of hyaluronan in serum or as a binding protein between hyaluronan and other matrix protein, including those on cell surfaces in tissues to regulate the localization, synthesis and degradation of hyaluronan which are essential to cells undergoing biological processes. The protein is Inter-alpha-trypsin inhibitor heavy chain H3 (Itih3) of Mus musculus (Mouse).